Consider the following 197-residue polypeptide: Putative protein N5-glutamine methyltransferase MJ0928 (197 aa).

S-adenosyl-L-methionine-binding positions include 42-46 (GVGTG), Asp-64, and Asn-105. 105–108 (NPPY) contributes to the substrate binding site.

The protein belongs to the eukaryotic/archaeal PrmC-related family.

It catalyses the reaction L-glutaminyl-[protein] + S-adenosyl-L-methionine = N(5)-methyl-L-glutaminyl-[protein] + S-adenosyl-L-homocysteine + H(+). Putative protein methyltransferase using S-adenosyl-L-methionine as the methyl donor. May methylate a Gln residue in target proteins. The sequence is that of Putative protein N5-glutamine methyltransferase MJ0928 from Methanocaldococcus jannaschii (strain ATCC 43067 / DSM 2661 / JAL-1 / JCM 10045 / NBRC 100440) (Methanococcus jannaschii).